A 216-amino-acid chain; its full sequence is FMN-dependent NADH:quinone oxidoreductase 2 (216 aa).

Residues Ser-9, 15–17 (SVS), 96–99 (MYNF), and 140–143 (SRGG) each bind FMN.

Belongs to the azoreductase type 1 family. As to quaternary structure, homodimer. It depends on FMN as a cofactor.

The catalysed reaction is 2 a quinone + NADH + H(+) = 2 a 1,4-benzosemiquinone + NAD(+). It carries out the reaction N,N-dimethyl-1,4-phenylenediamine + anthranilate + 2 NAD(+) = 2-(4-dimethylaminophenyl)diazenylbenzoate + 2 NADH + 2 H(+). Quinone reductase that provides resistance to thiol-specific stress caused by electrophilic quinones. Functionally, also exhibits azoreductase activity. Catalyzes the reductive cleavage of the azo bond in aromatic azo compounds to the corresponding amines. This is FMN-dependent NADH:quinone oxidoreductase 2 from Xanthomonas euvesicatoria pv. vesicatoria (strain 85-10) (Xanthomonas campestris pv. vesicatoria).